The sequence spans 109 residues: Spermidine export protein MdtI (109 aa).

Transmembrane regions (helical) follow at residues 6–26 (WWHA…NILL), 36–56 (WMGI…AQAV), 63–83 (IAYA…GWIM), and 88–108 (LNYK…MIKM).

This sequence belongs to the drug/metabolite transporter (DMT) superfamily. Small multidrug resistance (SMR) (TC 2.A.7.1) family. MdtI subfamily. As to quaternary structure, forms a complex with MdtJ.

The protein resides in the cell inner membrane. Catalyzes the excretion of spermidine. The protein is Spermidine export protein MdtI of Photorhabdus laumondii subsp. laumondii (strain DSM 15139 / CIP 105565 / TT01) (Photorhabdus luminescens subsp. laumondii).